The sequence spans 323 residues: Beta-ketoacyl-[acyl-carrier-protein] synthase III (323 aa).

Residues C114 and H250 contribute to the active site. Residues 251–255 (QANIR) are ACP-binding. The active site involves N280.

It belongs to the thiolase-like superfamily. FabH family. As to quaternary structure, homodimer.

It is found in the cytoplasm. The catalysed reaction is malonyl-[ACP] + acetyl-CoA + H(+) = 3-oxobutanoyl-[ACP] + CO2 + CoA. Its pathway is lipid metabolism; fatty acid biosynthesis. In terms of biological role, catalyzes the condensation reaction of fatty acid synthesis by the addition to an acyl acceptor of two carbons from malonyl-ACP. Catalyzes the first condensation reaction which initiates fatty acid synthesis and may therefore play a role in governing the total rate of fatty acid production. Possesses both acetoacetyl-ACP synthase and acetyl transacylase activities. Its substrate specificity determines the biosynthesis of branched-chain and/or straight-chain of fatty acids. This chain is Beta-ketoacyl-[acyl-carrier-protein] synthase III, found in Ruegeria sp. (strain TM1040) (Silicibacter sp.).